A 478-amino-acid chain; its full sequence is Argininosuccinate lyase (478 aa).

The protein belongs to the lyase 1 family. Argininosuccinate lyase subfamily.

The protein localises to the cytoplasm. It catalyses the reaction 2-(N(omega)-L-arginino)succinate = fumarate + L-arginine. Its pathway is amino-acid biosynthesis; L-arginine biosynthesis; L-arginine from L-ornithine and carbamoyl phosphate: step 3/3. The sequence is that of Argininosuccinate lyase from Rhodospirillum rubrum (strain ATCC 11170 / ATH 1.1.1 / DSM 467 / LMG 4362 / NCIMB 8255 / S1).